The chain runs to 271 residues: Phosphate import ATP-binding protein PstB (271 aa).

The ABC transporter domain maps to 25-266; that stretch reads VDVRQLSLWY…PKHPYTEAYI (242 aa). Residue 57–64 coordinates ATP; it reads GPSGCGKS.

Belongs to the ABC transporter superfamily. Phosphate importer (TC 3.A.1.7) family. In terms of assembly, the complex is composed of two ATP-binding proteins (PstB), two transmembrane proteins (PstC and PstA) and a solute-binding protein (PstS).

The protein resides in the cell inner membrane. The enzyme catalyses phosphate(out) + ATP + H2O = ADP + 2 phosphate(in) + H(+). Its function is as follows. Part of the ABC transporter complex PstSACB involved in phosphate import. Responsible for energy coupling to the transport system. The chain is Phosphate import ATP-binding protein PstB from Thermus thermophilus (strain ATCC BAA-163 / DSM 7039 / HB27).